A 76-amino-acid chain; its full sequence is U14-hexatoxin-Hi1a (76 aa).

Positions 1–18 are cleaved as a signal peptide; that stretch reads MMQLAVLICLSLVVNTFA. Intrachain disulfides connect Cys-21–Cys-34, Cys-27–Cys-39, and Cys-33–Cys-61.

As to expression, expressed by the venom gland.

It localises to the secreted. Functionally, probable ion channel inhibitor. This Hadronyche infensa (Fraser island funnel-web spider) protein is U14-hexatoxin-Hi1a.